We begin with the raw amino-acid sequence, 680 residues long: Structure-specific endonuclease subunit SLX4 (680 aa).

3 disordered regions span residues 15–92 (EVAK…EPVV), 141–183 (ESSS…STQQ), and 450–490 (LGSG…ATRL). The segment covering 22-33 (DSDEPIIDEDDL) has biased composition (acidic residues). Positions 60-86 (NNSKDTFKETPLELVDKEEAIEDKAPN) are enriched in basic and acidic residues. The segment covering 156–174 (LKSKKITKPKLTKTSKRTK) has biased composition (basic residues). A compositionally biased stretch (polar residues) spans 473-490 (TVISRSPQSTRTPQATRL).

The protein belongs to the SLX4 family. In terms of assembly, forms a heterodimer with SLX1. Phosphorylated in response to DNA damage.

It localises to the nucleus. Regulatory subunit of the SLX1-SLX4 structure-specific endonuclease that resolves DNA secondary structures generated during DNA repair and recombination. Has endonuclease activity towards branched DNA substrates, introducing single-strand cuts in duplex DNA close to junctions with ss-DNA. This chain is Structure-specific endonuclease subunit SLX4, found in Vanderwaltozyma polyspora (strain ATCC 22028 / DSM 70294 / BCRC 21397 / CBS 2163 / NBRC 10782 / NRRL Y-8283 / UCD 57-17) (Kluyveromyces polysporus).